We begin with the raw amino-acid sequence, 98 residues long: NADH-ubiquinone oxidoreductase chain 4L (98 aa).

Helical transmembrane passes span 1–21 (MSMV…GMLV), 29–49 (SLLC…VTIL), and 61–81 (IVLL…LVMV).

This sequence belongs to the complex I subunit 4L family. Core subunit of respiratory chain NADH dehydrogenase (Complex I) which is composed of 45 different subunits.

Its subcellular location is the mitochondrion inner membrane. The catalysed reaction is a ubiquinone + NADH + 5 H(+)(in) = a ubiquinol + NAD(+) + 4 H(+)(out). Functionally, core subunit of the mitochondrial membrane respiratory chain NADH dehydrogenase (Complex I) which catalyzes electron transfer from NADH through the respiratory chain, using ubiquinone as an electron acceptor. Part of the enzyme membrane arm which is embedded in the lipid bilayer and involved in proton translocation. The protein is NADH-ubiquinone oxidoreductase chain 4L (MT-ND4L) of Canis latrans (Coyote).